Here is a 396-residue protein sequence, read N- to C-terminus: Putative pyridoxal phosphate-dependent acyltransferase (396 aa).

Residue 111–112 participates in pyridoxal 5'-phosphate binding; sequence GF. Position 136 (H136) interacts with substrate. Pyridoxal 5'-phosphate contacts are provided by residues S186, 211–214, and 241–244; these read DDAH and TLSK. N6-(pyridoxal phosphate)lysine is present on K244. T358 lines the substrate pocket.

The protein belongs to the class-II pyridoxal-phosphate-dependent aminotransferase family. As to quaternary structure, homodimer. Pyridoxal 5'-phosphate serves as cofactor.

In Bacillus cereus (strain ATCC 14579 / DSM 31 / CCUG 7414 / JCM 2152 / NBRC 15305 / NCIMB 9373 / NCTC 2599 / NRRL B-3711), this protein is Putative pyridoxal phosphate-dependent acyltransferase.